The primary structure comprises 391 residues: Probable acridone synthase 4 (391 aa).

Residue Cys164 is part of the active site.

It belongs to the thiolase-like superfamily. Chalcone/stilbene synthases family.

The enzyme catalyses N-methylanthraniloyl-CoA + 3 malonyl-CoA + 3 H(+) = 1,3-dihydroxy-N-methylacridone + 3 CO2 + 4 CoA + H2O. The sequence is that of Probable acridone synthase 4 (ACS4) from Ruta graveolens (Common rue).